The sequence spans 134 residues: Rubredoxin-2 (134 aa).

Positions 1–53 (MAKYQCPDCQYIYDECKGEPHEGFQPNTNWGEIPEEWACPDCAVRDKIDFKML) constitute a Rubredoxin-like domain. The Fe cation site is built by Cys6, Cys9, Cys39, and Cys42. Residues 99–116 (SITDERENTPDNKVERRS) are compositionally biased toward basic and acidic residues. The tract at residues 99 to 134 (SITDERENTPDNKVERRSQSQAVRRSSVKKIKNNKR) is disordered. Residues 124-134 (SSVKKIKNNKR) are compositionally biased toward basic residues.

It belongs to the rubredoxin family. Requires Fe(3+) as cofactor.

It is found in the cytoplasm. It functions in the pathway hydrocarbon metabolism; alkane degradation. In terms of biological role, involved in the hydrocarbon hydroxylating system, which transfers electrons from NADH to rubredoxin reductase and then through rubredoxin to alkane 1 monooxygenase. This Pseudomonas putida (Arthrobacter siderocapsulatus) protein is Rubredoxin-2 (alkF).